The following is a 65-amino-acid chain: Neurotoxin Bot2 (65 aa).

The region spanning 2 to 64 (RDAYIAQPEN…VPIRIEGKCH (63 aa)) is the LCN-type CS-alpha/beta domain. 4 disulfides stabilise this stretch: cysteine 12-cysteine 63, cysteine 16-cysteine 36, cysteine 22-cysteine 46, and cysteine 26-cysteine 48. Phenylalanine 65 bears the Phenylalanine amide mark.

It belongs to the long (4 C-C) scorpion toxin superfamily. Sodium channel inhibitor family. Alpha subfamily. In terms of tissue distribution, expressed by the venom gland.

The protein localises to the secreted. Its function is as follows. Binds to sodium channels (Nav) and inhibits the inactivation of the activated channels, thereby blocking neuronal transmission. The sequence is that of Neurotoxin Bot2 from Buthus occitanus tunetanus (Common European scorpion).